We begin with the raw amino-acid sequence, 358 residues long: Neuronal-specific septin-3 (358 aa).

Residues 1–10 (MSKGLPETRT) show a composition bias toward basic and acidic residues. The tract at residues 1 to 30 (MSKGLPETRTDAAMSELVPEPRPKPAVPMK) is disordered. The region spanning 58-331 (TGFDFNIMVV…ETYRAKRLND (274 aa)) is the Septin-type G domain. Positions 68 to 75 (GQSGLGKS) are G1 motif. Residue 68-75 (GQSGLGKS) participates in GTP binding. Ser-91 is modified (phosphoserine). A GTP-binding site is contributed by Thr-102. The segment at 125-128 (DTPG) is G3 motif. Residues 207 to 210 (AKAD) are G4 motif. GTP is bound by residues 208–216 (KADTMTLEE), Gly-265, and Arg-280.

It belongs to the TRAFAC class TrmE-Era-EngA-EngB-Septin-like GTPase superfamily. Septin GTPase family. As to quaternary structure, septins polymerize into heterooligomeric protein complexes that form filaments, and can associate with cellular membranes, actin filaments and microtubules. GTPase activity is required for filament formation. Phosphorylated by PKG on serine residues. Phosphorylated by PKG on Ser-91. Brain-specific.

Its subcellular location is the cytoplasm. It is found in the cytoskeleton. It localises to the synapse. Filament-forming cytoskeletal GTPase. May play a role in cytokinesis (Potential). This Homo sapiens (Human) protein is Neuronal-specific septin-3.